Here is a 388-residue protein sequence, read N- to C-terminus: Chaperone protein DnaJ (388 aa).

The J domain occupies 5-70 (DYYTTLNISN…KKRNLYDQYG (66 aa)). A CR-type zinc finger spans residues 135–213 (GIKKEIRIPK…CFGQGRIKKS (79 aa)). Residues cysteine 148, cysteine 151, cysteine 165, cysteine 168, cysteine 187, cysteine 190, cysteine 201, and cysteine 204 each coordinate Zn(2+). CXXCXGXG motif repeat units follow at residues 148 to 155 (CQSCYGYG), 165 to 172 (CTSCNGHG), 187 to 194 (CSTCRGTG), and 201 to 208 (CKICFGQG).

This sequence belongs to the DnaJ family. Homodimer. Zn(2+) serves as cofactor.

The protein resides in the cytoplasm. Participates actively in the response to hyperosmotic and heat shock by preventing the aggregation of stress-denatured proteins and by disaggregating proteins, also in an autonomous, DnaK-independent fashion. Unfolded proteins bind initially to DnaJ; upon interaction with the DnaJ-bound protein, DnaK hydrolyzes its bound ATP, resulting in the formation of a stable complex. GrpE releases ADP from DnaK; ATP binding to DnaK triggers the release of the substrate protein, thus completing the reaction cycle. Several rounds of ATP-dependent interactions between DnaJ, DnaK and GrpE are required for fully efficient folding. Also involved, together with DnaK and GrpE, in the DNA replication of plasmids through activation of initiation proteins. The polypeptide is Chaperone protein DnaJ (Buchnera aphidicola subsp. Cinara cedri (strain Cc)).